Here is a 503-residue protein sequence, read N- to C-terminus: Probable DNA ligase (503 aa).

Asp-212 contributes to the ATP binding site. Lys-214 (N6-AMP-lysine intermediate) is an active-site residue. 6 residues coordinate ATP: Arg-219, Arg-234, Glu-263, Phe-296, Arg-368, and Lys-374.

The protein belongs to the ATP-dependent DNA ligase family. It depends on Mg(2+) as a cofactor.

It carries out the reaction ATP + (deoxyribonucleotide)n-3'-hydroxyl + 5'-phospho-(deoxyribonucleotide)m = (deoxyribonucleotide)n+m + AMP + diphosphate.. Its function is as follows. DNA ligase that seals nicks in double-stranded DNA during DNA replication, DNA recombination and DNA repair. The chain is Probable DNA ligase from Kineococcus radiotolerans (strain ATCC BAA-149 / DSM 14245 / SRS30216).